We begin with the raw amino-acid sequence, 490 residues long: Aspartyl/glutamyl-tRNA(Asn/Gln) amidotransferase subunit B (490 aa).

This sequence belongs to the GatB/GatE family. GatB subfamily. Heterotrimer of A, B and C subunits.

The catalysed reaction is L-glutamyl-tRNA(Gln) + L-glutamine + ATP + H2O = L-glutaminyl-tRNA(Gln) + L-glutamate + ADP + phosphate + H(+). The enzyme catalyses L-aspartyl-tRNA(Asn) + L-glutamine + ATP + H2O = L-asparaginyl-tRNA(Asn) + L-glutamate + ADP + phosphate + 2 H(+). In terms of biological role, allows the formation of correctly charged Asn-tRNA(Asn) or Gln-tRNA(Gln) through the transamidation of misacylated Asp-tRNA(Asn) or Glu-tRNA(Gln) in organisms which lack either or both of asparaginyl-tRNA or glutaminyl-tRNA synthetases. The reaction takes place in the presence of glutamine and ATP through an activated phospho-Asp-tRNA(Asn) or phospho-Glu-tRNA(Gln). This chain is Aspartyl/glutamyl-tRNA(Asn/Gln) amidotransferase subunit B, found in Methylobacterium sp. (strain 4-46).